The following is a 251-amino-acid chain: Octanoyltransferase (251 aa).

The 182-residue stretch at 56–237 (ADTGDEIWVV…RLIANLDGES (182 aa)) folds into the BPL/LPL catalytic domain. Residues 96 to 103 (RGGQITYH), 168 to 170 (ALG), and 181 to 183 (GLS) contribute to the substrate site. Residue Cys-199 is the Acyl-thioester intermediate of the active site.

The protein belongs to the LipB family.

It localises to the cytoplasm. The catalysed reaction is octanoyl-[ACP] + L-lysyl-[protein] = N(6)-octanoyl-L-lysyl-[protein] + holo-[ACP] + H(+). The protein operates within protein modification; protein lipoylation via endogenous pathway; protein N(6)-(lipoyl)lysine from octanoyl-[acyl-carrier-protein]: step 1/2. In terms of biological role, catalyzes the transfer of endogenously produced octanoic acid from octanoyl-acyl-carrier-protein onto the lipoyl domains of lipoate-dependent enzymes. Lipoyl-ACP can also act as a substrate although octanoyl-ACP is likely to be the physiological substrate. This chain is Octanoyltransferase, found in Burkholderia ambifaria (strain ATCC BAA-244 / DSM 16087 / CCUG 44356 / LMG 19182 / AMMD) (Burkholderia cepacia (strain AMMD)).